The primary structure comprises 375 residues: Acetylornithine aminotransferase (375 aa).

Residues 93-94 and Phe-120 contribute to the pyridoxal 5'-phosphate site; that span reads GT. A N(2)-acetyl-L-ornithine-binding site is contributed by Arg-123. Position 205 to 208 (205 to 208) interacts with pyridoxal 5'-phosphate; it reads DEVQ. Lys-234 bears the N6-(pyridoxal phosphate)lysine mark. Thr-262 contributes to the N(2)-acetyl-L-ornithine binding site. Thr-263 is a pyridoxal 5'-phosphate binding site.

Belongs to the class-III pyridoxal-phosphate-dependent aminotransferase family. ArgD subfamily. Homodimer. Pyridoxal 5'-phosphate is required as a cofactor.

The protein localises to the cytoplasm. It carries out the reaction N(2)-acetyl-L-ornithine + 2-oxoglutarate = N-acetyl-L-glutamate 5-semialdehyde + L-glutamate. It functions in the pathway amino-acid biosynthesis; L-arginine biosynthesis; N(2)-acetyl-L-ornithine from L-glutamate: step 4/4. The polypeptide is Acetylornithine aminotransferase (Staphylococcus epidermidis (strain ATCC 35984 / DSM 28319 / BCRC 17069 / CCUG 31568 / BM 3577 / RP62A)).